A 322-amino-acid chain; its full sequence is AB hydrolase superfamily protein FGSG_00044 (322 aa).

One can recognise an AB hydrolase-1 domain in the interval Arg-36–Lys-319.

This sequence belongs to the AB hydrolase superfamily.

It functions in the pathway mycotoxin biosynthesis. In terms of biological role, AB hydrolase superfamily protein; part of the gene cluster that mediates the biosynthesis of gramillins A and B, bicyclic lipopeptides that induce cell death in maize leaves but not in wheat leaves. The nonribosomal peptide synthetase GRA1 incorporates respectively a glutamic adic (Glu), a leucine (Leu), a serine (Ser), a hydroxyglutamine (HOGln), a 2-amino decanoic acid, and 2 cysteins (CysB and CysA). The biosynthesis of 2-amino decanoic acid incorporated in gramillins could be initiated by a fatty acid synthase composed of the alpha and beta subunits FGSG_00036 and FGSG_11656. The cytochrome P450 monooxygenase FGSG_15680 could hydroxylate the fatty acid chain. Subsequent oxidation to the ketone by the oxidoreductase FGSG_00048 and transamination by aminotransferase FGSG_00049 could form 2-amino-decanoic acid. On the other hand, FGSG_15680 could also be responsible for the HO-modified glutamine at the gamma-position. Whether hydroxylation occurs on the fully assembled product or on the Gln residue prior to assembly into the gramillins requires further proof. The thioredoxin FGSG_00043 could also be required for the disulfide-bond formation between CysA and CysB. The specific involvement of the remaining proteins from the cluster is more difficult to discern, but could have broader regulatory (FGSG_00040 and FGSG_11657) or enzymatic functions (FGSG_00044 and FGSG_00045). The final C-domain of GRA1 does not possess the expected sequence of a termination CT domain, often implicated in macrocyclization and release of a cyclopeptidein fungal NRPs; and the thioesterase FGSG_00047 may act in concert with the terminal C-domain of GRA1 to catalyze the formation of the macrocyclic anhydride and release of the products. The polypeptide is AB hydrolase superfamily protein FGSG_00044 (Gibberella zeae (strain ATCC MYA-4620 / CBS 123657 / FGSC 9075 / NRRL 31084 / PH-1) (Wheat head blight fungus)).